The chain runs to 466 residues: 3-isopropylmalate dehydratase large subunit (466 aa).

3 residues coordinate [4Fe-4S] cluster: cysteine 347, cysteine 407, and cysteine 410.

Belongs to the aconitase/IPM isomerase family. LeuC type 1 subfamily. In terms of assembly, heterodimer of LeuC and LeuD. The cofactor is [4Fe-4S] cluster.

It carries out the reaction (2R,3S)-3-isopropylmalate = (2S)-2-isopropylmalate. It participates in amino-acid biosynthesis; L-leucine biosynthesis; L-leucine from 3-methyl-2-oxobutanoate: step 2/4. Functionally, catalyzes the isomerization between 2-isopropylmalate and 3-isopropylmalate, via the formation of 2-isopropylmaleate. This is 3-isopropylmalate dehydratase large subunit from Escherichia coli O17:K52:H18 (strain UMN026 / ExPEC).